Consider the following 967-residue polypeptide: Isoleucine--tRNA ligase 2 (967 aa).

Residues Pro-58–His-68 carry the 'HIGH' region motif. The segment at Glu-430–Val-463 is disordered. Glu-598 provides a ligand contact to L-isoleucyl-5'-AMP. The short motif at Lys-639 to Ser-643 is the 'KMSKS' region element. Lys-642 is an ATP binding site. Positions 922, 925, 942, and 945 each coordinate Zn(2+).

It belongs to the class-I aminoacyl-tRNA synthetase family. IleS type 1 subfamily. As to quaternary structure, monomer. It depends on Zn(2+) as a cofactor.

The protein resides in the cytoplasm. The enzyme catalyses tRNA(Ile) + L-isoleucine + ATP = L-isoleucyl-tRNA(Ile) + AMP + diphosphate. In terms of biological role, catalyzes the attachment of isoleucine to tRNA(Ile). As IleRS can inadvertently accommodate and process structurally similar amino acids such as valine, to avoid such errors it has two additional distinct tRNA(Ile)-dependent editing activities. One activity is designated as 'pretransfer' editing and involves the hydrolysis of activated Val-AMP. The other activity is designated 'posttransfer' editing and involves deacylation of mischarged Val-tRNA(Ile). In Burkholderia pseudomallei (strain K96243), this protein is Isoleucine--tRNA ligase 2.